A 93-amino-acid polypeptide reads, in one-letter code: Small ribosomal subunit protein uS19 (93 aa).

The protein belongs to the universal ribosomal protein uS19 family.

In terms of biological role, protein S19 forms a complex with S13 that binds strongly to the 16S ribosomal RNA. The chain is Small ribosomal subunit protein uS19 from Leptospira borgpetersenii serovar Hardjo-bovis (strain JB197).